A 299-amino-acid polypeptide reads, in one-letter code: dTDP-4-dehydrorhamnose reductase (299 aa).

Residues 10 to 12, Asp-30, 39 to 40, and 63 to 65 contribute to the NADH site; these read GQV, DF, and AHT. 11-12 is a binding site for NADPH; that stretch reads QV. NADPH is bound by residues 39–40, 63–65, and Tyr-102; these read DF and AHT. Residue 104-105 participates in dTDP-beta-L-rhamnose binding; sequence TD. Positions 128 and 132 each coordinate NADH. Residues Tyr-128 and Lys-132 each coordinate NADPH. Tyr-128 acts as the Proton donor/acceptor in catalysis. Trp-153 contacts dTDP-beta-L-rhamnose.

The protein belongs to the dTDP-4-dehydrorhamnose reductase family. As to quaternary structure, homodimer. Requires Mg(2+) as cofactor.

The enzyme catalyses dTDP-beta-L-rhamnose + NADP(+) = dTDP-4-dehydro-beta-L-rhamnose + NADPH + H(+). The protein operates within carbohydrate biosynthesis; dTDP-L-rhamnose biosynthesis. It functions in the pathway bacterial outer membrane biogenesis; LPS O-antigen biosynthesis. In terms of biological role, involved in the biosynthesis of the dTDP-L-rhamnose which is an important component of lipopolysaccharide (LPS). Catalyzes the reduction of dTDP-6-deoxy-L-lyxo-4-hexulose to yield dTDP-L-rhamnose. RmlD uses NADH and NADPH nearly equally well. The protein is dTDP-4-dehydrorhamnose reductase of Shigella flexneri.